We begin with the raw amino-acid sequence, 183 residues long: A-type ATP synthase subunit E (183 aa).

This sequence belongs to the V-ATPase E subunit family. As to quaternary structure, has multiple subunits with at least A(3), B(3), C, D, E, F, H, I and proteolipid K(x).

It localises to the cell membrane. Functionally, component of the A-type ATP synthase that produces ATP from ADP in the presence of a proton gradient across the membrane. In Methanococcoides burtonii (strain DSM 6242 / NBRC 107633 / OCM 468 / ACE-M), this protein is A-type ATP synthase subunit E.